A 118-amino-acid chain; its full sequence is Ribonuclease P protein component (118 aa).

Belongs to the RnpA family. In terms of assembly, consists of a catalytic RNA component (M1 or rnpB) and a protein subunit.

The enzyme catalyses Endonucleolytic cleavage of RNA, removing 5'-extranucleotides from tRNA precursor.. Its function is as follows. RNaseP catalyzes the removal of the 5'-leader sequence from pre-tRNA to produce the mature 5'-terminus. It can also cleave other RNA substrates such as 4.5S RNA. The protein component plays an auxiliary but essential role in vivo by binding to the 5'-leader sequence and broadening the substrate specificity of the ribozyme. The protein is Ribonuclease P protein component of Rickettsia canadensis (strain McKiel).